Here is a 240-residue protein sequence, read N- to C-terminus: Transmembrane emp24 domain-containing protein 6 (240 aa).

The N-terminal stretch at 1-21 (MFPLLFVAGLVVLNLVSSARS) is a signal peptide. Residues 22 to 200 (QKTEPLSGTG…FFLLQSNYNY (179 aa)) lie on the Lumenal side of the membrane. Residues 53–138 (TECFWQFAHQ…SVQVYLNFGV (86 aa)) form the GOLD domain. Residues N107 and N156 are each glycosylated (N-linked (GlcNAc...) asparagine). The helical transmembrane segment at 201–223 (VNWWSTAQSLVIVLSGILQLYFL) threads the bilayer. Over 224-240 (KRLFNTPMTTETQKPRC) the chain is Cytoplasmic.

It belongs to the EMP24/GP25L family.

The protein localises to the endoplasmic reticulum membrane. The polypeptide is Transmembrane emp24 domain-containing protein 6 (TMED6) (Bos taurus (Bovine)).